We begin with the raw amino-acid sequence, 1047 residues long: Probable sucrose-phosphate synthase 2 (1047 aa).

The segment covering 101 to 123 (EGKNAKREAKREREREKARREVT) has biased composition (basic and acidic residues). Residues 101 to 153 (EGKNAKREAKREREREKARREVTAEMSEDFSEGEKADLPGEIPTPSDNNTKGR) are disordered. Phosphoserine occurs at positions 127, 131, and 159. Residues 712–731 (KSGSNNGVDTNLDAEDRAAE) form a disordered region.

This sequence belongs to the glycosyltransferase 1 family. As to quaternary structure, homodimer or homotetramer. As to expression, expressed in roots, cauline leaves, flower buds, flowers and anthers. Highly expressed in maturing nectaries.

The catalysed reaction is beta-D-fructose 6-phosphate + UDP-alpha-D-glucose = sucrose 6(F)-phosphate + UDP + H(+). Its pathway is glycan biosynthesis; sucrose biosynthesis; sucrose from D-fructose 6-phosphate and UDP-alpha-D-glucose: step 1/2. Its activity is regulated as follows. Activity is regulated by phosphorylation and moderated by concentration of metabolites and light. In terms of biological role, plays a role in photosynthetic sucrose synthesis by catalyzing the rate-limiting step of sucrose biosynthesis from UDP-glucose and fructose- 6-phosphate. Involved in the regulation of carbon partitioning in the leaves of plants. May regulate the synthesis of sucrose and therefore play a major role as a limiting factor in the export of photoassimilates out of the leaf. Plays a role for sucrose availability that is essential for plant growth and fiber elongation. Required for nectar secretion. This Arabidopsis thaliana (Mouse-ear cress) protein is Probable sucrose-phosphate synthase 2 (SPS2).